Consider the following 103-residue polypeptide: UPF0235 protein RHECIAT_CH0004196 (103 aa).

It belongs to the UPF0235 family.

In Rhizobium etli (strain CIAT 652), this protein is UPF0235 protein RHECIAT_CH0004196.